Here is a 375-residue protein sequence, read N- to C-terminus: tRNA-specific 2-thiouridylase MnmA (375 aa).

ATP is bound by residues 13 to 20 (AMSGGVDS) and Met-39. Residue Cys-111 is the Nucleophile of the active site. Cys-111 and Cys-208 are joined by a disulfide. An ATP-binding site is contributed by Gly-135. The interaction with tRNA stretch occupies residues 158-160 (KDQ). The active-site Cysteine persulfide intermediate is the Cys-208. The tract at residues 313 to 314 (RY) is interaction with tRNA.

It belongs to the MnmA/TRMU family.

The protein localises to the cytoplasm. The enzyme catalyses S-sulfanyl-L-cysteinyl-[protein] + uridine(34) in tRNA + AH2 + ATP = 2-thiouridine(34) in tRNA + L-cysteinyl-[protein] + A + AMP + diphosphate + H(+). Catalyzes the 2-thiolation of uridine at the wobble position (U34) of tRNA, leading to the formation of s(2)U34. This is tRNA-specific 2-thiouridylase MnmA from Geotalea uraniireducens (strain Rf4) (Geobacter uraniireducens).